The primary structure comprises 1013 residues: Ephrin type-A receptor 5 (1013 aa).

An N-terminal signal peptide occupies residues 1–31 (MGLRGGGGRAGGPAPGWTCLLLCAALRSLLA). The Extracellular portion of the chain corresponds to 32–549 (SPGSEVNLLD…AASSDQSQIP (518 aa)). In terms of domain architecture, Eph LBD spans 36 to 214 (EVNLLDSRTV…YYKKCPSVIR (179 aa)). N-linked (GlcNAc...) asparagine glycosylation is found at Asn240, Asn275, Asn345, Asn399, Asn412, and Asn437. 2 consecutive Fibronectin type-III domains span residues 333 to 443 (PPSA…TNQA) and 444 to 538 (APSP…TSPV). A helical membrane pass occupies residues 550-570 (IIVVSVTVGVILLAVVIGFLL). At 571 to 1013 (SGSCCDHGCG…VQLVNGMVPL (443 aa)) the chain is on the cytoplasmic side. Residues Tyr626 and Tyr632 each carry the phosphotyrosine; by autocatalysis modification. A Protein kinase domain is found at 651 to 912 (ITIERVIGAG…EIVSMLDKLI (262 aa)). ATP is bound by residues 657–665 (IGAGEFGEV) and Lys683. Catalysis depends on Asp776, which acts as the Proton acceptor. 2 positions are modified to phosphotyrosine; by autocatalysis: Tyr809 and Tyr958. Positions 941-1013 (GAYRSVGEWL…VQLVNGMVPL (73 aa)) constitute an SAM domain. Positions 1011-1013 (VPL) match the PDZ-binding motif.

This sequence belongs to the protein kinase superfamily. Tyr protein kinase family. Ephrin receptor subfamily. In terms of assembly, heterotetramer upon binding of the ligand. The heterotetramer is composed of an ephrin dimer and a receptor dimer. Oligomerization is probably required to induce biological responses. Phosphorylated. Phosphorylation is stimulated by the ligand EFNA5. As to expression, detected in the 10-day embryonic brain, weaker expression in the rest of the 10-day embryo. Undetected in adult tissues.

It is found in the cell membrane. Its subcellular location is the cell projection. The protein resides in the axon. It localises to the dendrite. It carries out the reaction L-tyrosyl-[protein] + ATP = O-phospho-L-tyrosyl-[protein] + ADP + H(+). Receptor tyrosine kinase which binds promiscuously GPI-anchored ephrin-A family ligands residing on adjacent cells, leading to contact-dependent bidirectional signaling into neighboring cells. The signaling pathway downstream of the receptor is referred to as forward signaling while the signaling pathway downstream of the ephrin ligand is referred to as reverse signaling. Among GPI-anchored ephrin-A ligands, EFNA5 most probably constitutes the cognate/functional ligand for EPHA5. Functions as an axon guidance molecule during development and may be involved in the development of the retinotectal, entorhino-hippocampal and hippocamposeptal pathways. Together with EFNA5 plays also a role in synaptic plasticity in adult brain through regulation of synaptogenesis. The chain is Ephrin type-A receptor 5 (EPHA5) from Gallus gallus (Chicken).